The sequence spans 499 residues: MLHSASEILKQLDSGEVTAVEVIAQSLAAIRASQPTINAFTHVAEETAMQAAEAVDADRKAGKTLGPLAGLPVAIKDVLCTSDMPTTCSSKMLEGFVPPYDATVVARLKSAGAIVVGKTNMDEFAMGASTETSAMGVTGNPWDTTKTPGGSSGGAAAAVAAGAVPLSLGTDTGGSIRQPAAFCGITGLKPTYGRVSRYGLVAFASSLDQAGPMGWSVDDVAIGLQAMAGYDPRDSTSVNAEVPDFTPAMAAEDVRGMRIGVLREGLDQDGISPAVRDALATAESVFREQGAEIVEVELPHSKYWVPTYYVIAPCEASSNLSRFDGAHYGYRVADAEIAAADSGPLEAMYSLSRAGGFGSEVKRRIMVGTYALSEGYYDAYYNQALKVRRLIRNDYDAAFQQVDLMLGPVTPSPAFALNEKTDDPIAMYLCDLFTVGANLAGVPAISLPGGFDAVGLPVGVQLQAPVMEETRLLRAGNVFQMASDFHTRRPPTFTANHSQ.

Residues Lys76 and Ser151 each act as charge relay system in the active site. The Acyl-ester intermediate role is filled by Ser175.

Belongs to the amidase family. GatA subfamily. In terms of assembly, heterotrimer of A, B and C subunits.

It carries out the reaction L-glutamyl-tRNA(Gln) + L-glutamine + ATP + H2O = L-glutaminyl-tRNA(Gln) + L-glutamate + ADP + phosphate + H(+). In terms of biological role, allows the formation of correctly charged Gln-tRNA(Gln) through the transamidation of misacylated Glu-tRNA(Gln) in organisms which lack glutaminyl-tRNA synthetase. The reaction takes place in the presence of glutamine and ATP through an activated gamma-phospho-Glu-tRNA(Gln). The protein is Glutamyl-tRNA(Gln) amidotransferase subunit A of Rhodopirellula baltica (strain DSM 10527 / NCIMB 13988 / SH1).